Consider the following 131-residue polypeptide: Small ribosomal subunit protein uS8 (131 aa).

The protein belongs to the universal ribosomal protein uS8 family. Part of the 30S ribosomal subunit. Contacts proteins S5 and S12.

In terms of biological role, one of the primary rRNA binding proteins, it binds directly to 16S rRNA central domain where it helps coordinate assembly of the platform of the 30S subunit. This Finegoldia magna (strain ATCC 29328 / DSM 20472 / WAL 2508) (Peptostreptococcus magnus) protein is Small ribosomal subunit protein uS8.